Here is a 179-residue protein sequence, read N- to C-terminus: MEKIIIDEDQFMRTISRISHEIIEKHKNLNDLVIVGIKRRGAEIAELVKRKINELTGSRIPSIDLDITFYRDDLEYAEPNSQSPVYNGSSDFISVQNKTVILVDDVLFTGRTIRAALDALVDFGRASKVELVIFVDRGHRELPIRADYVGKNVPTSRSEKVQVRTMKFDGCYEVALLSK.

Positions 100 to 112 (VILVDDVLFTGRT) match the PRPP-binding motif.

This sequence belongs to the purine/pyrimidine phosphoribosyltransferase family. PyrR subfamily.

It catalyses the reaction UMP + diphosphate = 5-phospho-alpha-D-ribose 1-diphosphate + uracil. Its function is as follows. Regulates the transcription of the pyrimidine nucleotide (pyr) operon in response to exogenous pyrimidines. In terms of biological role, also displays a weak uracil phosphoribosyltransferase activity which is not physiologically significant. The polypeptide is Bifunctional protein PyrR (Actinobacillus succinogenes (strain ATCC 55618 / DSM 22257 / CCUG 43843 / 130Z)).